The sequence spans 126 residues: Fluoride-specific ion channel FluC 2 (126 aa).

4 consecutive transmembrane segments (helical) span residues 11–31 (VLLI…ICEH), 36–56 (LGIL…MYDA), 69–89 (AFGT…VQSF), and 93–113 (FLPA…GVFF). Glycine 76 and threonine 79 together coordinate Na(+).

This sequence belongs to the fluoride channel Fluc/FEX (TC 1.A.43) family.

Its subcellular location is the cell membrane. The enzyme catalyses fluoride(in) = fluoride(out). Its activity is regulated as follows. Na(+) is not transported, but it plays an essential structural role and its presence is essential for fluoride channel function. Functionally, fluoride-specific ion channel. Important for reducing fluoride concentration in the cell, thus reducing its toxicity. The protein is Fluoride-specific ion channel FluC 2 of Methanosarcina mazei (strain ATCC BAA-159 / DSM 3647 / Goe1 / Go1 / JCM 11833 / OCM 88) (Methanosarcina frisia).